The chain runs to 231 residues: Thrombin-like enzyme leucurobin (231 aa).

Positions 1 to 223 (VIGGDECDIN…YLPWIQSIIA (223 aa)) constitute a Peptidase S1 domain. Disulfide bonds link cysteine 7/cysteine 139, cysteine 26/cysteine 42, cysteine 74/cysteine 230, cysteine 118/cysteine 184, cysteine 150/cysteine 163, and cysteine 174/cysteine 199. Active-site charge relay system residues include histidine 41 and aspartate 86. Asparagine 146 carries an N-linked (GlcNAc...) asparagine glycan. The Charge relay system role is filled by serine 178. Residue asparagine 225 is glycosylated (N-linked (GlcNAc...) asparagine).

It belongs to the peptidase S1 family. Snake venom subfamily. As to quaternary structure, monomer. In terms of processing, glycosylated. Expressed by the venom gland.

Its subcellular location is the secreted. The enzyme catalyses Selective cleavage of Arg-|-Xaa bond in fibrinogen, to form fibrin, and release fibrinopeptide A. The specificity of further degradation of fibrinogen varies with species origin of the enzyme.. With respect to regulation, inhibited by PMSF and benzamidine. Its clotting effect is strongly inhibited by antibothropic serum. Is not inhibited by heparin. Its function is as follows. Thrombin-like snake venom serine protease that cleaves Arg-Gly bonds in alpha-chain of fibrinogen (FGA). Induces temporary episodes of opisthotonos and rapid rolling around the long axis of the animal (gyroxin-like effect), when injected into the tail veins of mice (0.143 ug/g mouse). In Bothrops leucurus (Whitetail lancehead), this protein is Thrombin-like enzyme leucurobin.